Here is a 683-residue protein sequence, read N- to C-terminus: Tripartite terminase subunit 3 (683 aa).

The Walker A motif motif lies at 217–224; the sequence is IPRRHGKT. The Walker B motif motif lies at 312 to 317; that stretch reads LLYIDE. Catalysis depends on glutamate 317, which acts as the For ATPase activity. Residues aspartate 472, glutamate 546, and aspartate 658 each act as for nuclease activity in the active site.

It belongs to the herpesviridae TRM3 protein family. As to quaternary structure, interacts with the terminase subunits TRM1 and TRM2. Interacts with portal protein.

The protein resides in the host nucleus. Functionally, component of the molecular motor that translocates viral genomic DNA in empty capsid during DNA packaging. Forms a tripartite terminase complex together with TRM1 and TRM2 in the host cytoplasm. Once the complex reaches the host nucleus, it interacts with the capsid portal vertex. This portal forms a ring in which genomic DNA is translocated into the capsid. TRM3 carries an RNase H-like nuclease activity that plays an important role for the cleavage of concatemeric viral DNA into unit length genomes. In Saimiri sciureus (Common squirrel monkey), this protein is Tripartite terminase subunit 3.